Here is a 497-residue protein sequence, read N- to C-terminus: Maintenance of mitochondrial morphology protein 1 (497 aa).

Residues 1-28 (MSSVLNPSSPHSWDLCCSSSSNRSYHRP) lie on the Lumenal side of the membrane. Residues 29–55 (THPIVGLLVGQLSVVLLIGAFIKFFIF) traverse the membrane as a helical segment. The Cytoplasmic portion of the chain corresponds to 56 to 497 (GEAPPSPSRS…GSLPDAVPIT (442 aa)). Disordered regions lie at residues 60–107 (PSPS…SSST), 284–330 (ESST…STTG), 402–421 (TGVR…AAGV), and 437–497 (EMLH…VPIT). The span at 66-77 (QTHRTSQHKRSY) shows a compositional bias: basic residues. Residues 81-94 (GARDLSPRTLKEKP) show a composition bias toward basic and acidic residues. Composition is skewed to polar residues over residues 95-107 (SSNV…SSST), 284-302 (ESST…NLRS), and 311-330 (PQES…STTG). One can recognise an SMP-LTD domain in the interval 140–393 (QPESLDWFNV…EPRVQVVALP (254 aa)). Residues 412-421 (DVSSSDAAGV) are compositionally biased toward low complexity. A compositionally biased stretch (basic and acidic residues) spans 440–451 (HAAREVDAEGLR). Residues 462–473 (GSSSKYAQQNQS) show a composition bias toward polar residues. A compositionally biased stretch (basic and acidic residues) spans 474–484 (SRERGRADDPF).

Belongs to the MMM1 family. As to quaternary structure, homodimer. Component of the ER-mitochondria encounter structure (ERMES) or MDM complex, composed of MMM1, MDM10, MDM12 and MDM34. An MMM1 homodimer associates with one molecule of MDM12 on each side in a pairwise head-to-tail manner, and the SMP-LTD domains of MMM1 and MDM12 generate a continuous hydrophobic tunnel for phospholipid trafficking.

Its subcellular location is the endoplasmic reticulum membrane. In terms of biological role, component of the ERMES/MDM complex, which serves as a molecular tether to connect the endoplasmic reticulum (ER) and mitochondria. Components of this complex are involved in the control of mitochondrial shape and protein biogenesis, and function in nonvesicular lipid trafficking between the ER and mitochondria. The MDM12-MMM1 subcomplex functions in the major beta-barrel assembly pathway that is responsible for biogenesis of all outer membrane beta-barrel proteins, and acts in a late step after the SAM complex. The MDM10-MDM12-MMM1 subcomplex further acts in the TOM40-specific pathway after the action of the MDM12-MMM1 complex. Essential for establishing and maintaining the structure of mitochondria and maintenance of mtDNA nucleoids. In Uncinocarpus reesii (strain UAMH 1704), this protein is Maintenance of mitochondrial morphology protein 1.